The sequence spans 299 residues: Plant-type L-asparaginase (299 aa).

The Nucleophile role is filled by threonine 169. Residues 197–200 and 220–223 contribute to the substrate site; these read RVGD and TGVG.

Belongs to the Ntn-hydrolase family. As to quaternary structure, heterotetramer of two alpha and two beta chains arranged as a dimer of alpha/beta heterodimers. The uncleaved protein forms homodimers. In terms of processing, autocleaved. Generates the alpha and beta subunits. The N-terminal residue of the beta subunit is thought to be responsible for the nucleophile hydrolase activity.

The catalysed reaction is L-asparagine + H2O = L-aspartate + NH4(+). With respect to regulation, divalent metal ions and EDTA do not have significant effect on enzyme activity, indicating that activity is metal-independent. Its function is as follows. Catalyzes the hydrolysis of L-asparagine into L-aspartate and ammonia. Also displays D-asparaginase activity, which is about 20% of the L-asparaginase activity. Does not exhibit glutaminase activity. This is Plant-type L-asparaginase from Pyrobaculum calidifontis (strain DSM 21063 / JCM 11548 / VA1).